The chain runs to 711 residues: Polyribonucleotide nucleotidyltransferase (711 aa).

Mg(2+) is bound by residues D486 and D492. Positions 553–612 (PRIHTIKINPDKIKDVIGKGGSVIRALTEETGTTIEIEDDGTVKIAATDGEKAKHAIRRI) constitute a KH domain. One can recognise an S1 motif domain in the interval 622–690 (GRVYTGKVTR…RQGRIRLSIK (69 aa)). The interval 689-711 (IKEATEQSQPAAAPEAPAAEQGE) is disordered. Low complexity predominate over residues 694-711 (EQSQPAAAPEAPAAEQGE).

Belongs to the polyribonucleotide nucleotidyltransferase family. In terms of assembly, component of the RNA degradosome, which is a multiprotein complex involved in RNA processing and mRNA degradation. Mg(2+) serves as cofactor.

It is found in the cytoplasm. It carries out the reaction RNA(n+1) + phosphate = RNA(n) + a ribonucleoside 5'-diphosphate. Functionally, involved in mRNA degradation. Catalyzes the phosphorolysis of single-stranded polyribonucleotides processively in the 3'- to 5'-direction. The sequence is that of Polyribonucleotide nucleotidyltransferase from Shigella flexneri serotype 5b (strain 8401).